A 249-amino-acid polypeptide reads, in one-letter code: Small ribosomal subunit protein eS6 (249 aa).

The segment covering L223–A238 has biased composition (basic residues). The interval L223–K249 is disordered.

This sequence belongs to the eukaryotic ribosomal protein eS6 family. In terms of assembly, component of the small ribosomal subunit. Part of the small subunit (SSU) processome, composed of more than 70 proteins and the RNA chaperone small nucleolar RNA (snoRNA) U3. Ribosomal protein S6 is the major substrate of protein kinases in eukaryote ribosomes.

The protein localises to the cytoplasm. It is found in the nucleus. Its subcellular location is the nucleolus. In terms of biological role, component of the 40S small ribosomal subunit. Plays an important role in controlling cell growth and proliferation through the selective translation of particular classes of mRNA. Part of the small subunit (SSU) processome, first precursor of the small eukaryotic ribosomal subunit. During the assembly of the SSU processome in the nucleolus, many ribosome biogenesis factors, an RNA chaperone and ribosomal proteins associate with the nascent pre-rRNA and work in concert to generate RNA folding, modifications, rearrangements and cleavage as well as targeted degradation of pre-ribosomal RNA by the RNA exosome. The chain is Small ribosomal subunit protein eS6 (RPS6) from Leishmania infantum.